The sequence spans 77 residues: Envelope protein US9 homolog (77 aa).

Positions 12–13 (LL) match the Di-leucine internalization motif motif.

This sequence belongs to the alphaherpesvirinae envelope protein US9 family.

The sequence is that of Envelope protein US9 homolog from Chlorocebus aethiops (Green monkey).